The chain runs to 375 residues: cAMP-dependent protein kinase regulatory subunit (375 aa).

Residues 28 to 142 (RFCADYFNER…SLYKSVSHNF (115 aa)) are dimerization and phosphorylation. Positions 41–50 (REEADDDGPR) are enriched in basic and acidic residues. Positions 41 to 102 (REEADDDGPR…EPAAPFTRRT (62 aa)) are disordered. Positions 64-82 (GSSSRSTDGSLFRSSFADT) are enriched in polar residues. Positions 83-97 (SSEGPGSASSEPAAP) are enriched in low complexity. Ser103 carries the phosphoserine modification. Residues 143-258 (LFGN…FLKE), Glu208, Arg217, 261-375 (ILSD…DPTK), Glu328, and Arg337 each bind 3',5'-cyclic AMP.

The protein belongs to the cAMP-dependent kinase regulatory chain family. In terms of assembly, tetramer, composed of 2 regulatory (R) and 2 catalytic (C) subunits. In the presence of cAMP it dissociates into 2 active monomeric C subunits and an R dimer.

The chain is cAMP-dependent protein kinase regulatory subunit (PKAR) from Yarrowia lipolytica (strain CLIB 122 / E 150) (Yeast).